The sequence spans 214 residues: N-(5'-phosphoribosyl)anthranilate isomerase (214 aa).

Belongs to the TrpF family.

The enzyme catalyses N-(5-phospho-beta-D-ribosyl)anthranilate = 1-(2-carboxyphenylamino)-1-deoxy-D-ribulose 5-phosphate. It participates in amino-acid biosynthesis; L-tryptophan biosynthesis; L-tryptophan from chorismate: step 3/5. In Haloarcula marismortui (strain ATCC 43049 / DSM 3752 / JCM 8966 / VKM B-1809) (Halobacterium marismortui), this protein is N-(5'-phosphoribosyl)anthranilate isomerase.